The chain runs to 447 residues: Phosphoglucosamine mutase (447 aa).

The active-site Phosphoserine intermediate is serine 104. Residues serine 104, aspartate 243, aspartate 245, and aspartate 247 each coordinate Mg(2+). At serine 104 the chain carries Phosphoserine.

It belongs to the phosphohexose mutase family. Mg(2+) is required as a cofactor. Activated by phosphorylation.

The catalysed reaction is alpha-D-glucosamine 1-phosphate = D-glucosamine 6-phosphate. Its function is as follows. Catalyzes the conversion of glucosamine-6-phosphate to glucosamine-1-phosphate. This Corynebacterium efficiens (strain DSM 44549 / YS-314 / AJ 12310 / JCM 11189 / NBRC 100395) protein is Phosphoglucosamine mutase.